The chain runs to 206 residues: Large ribosomal subunit protein uL4 (206 aa).

The interval 63–93 (MYKQKGTGRARHHSARAPQFRGGGKAHGPVV) is disordered. The span at 64 to 77 (YKQKGTGRARHHSA) shows a compositional bias: basic residues.

It belongs to the universal ribosomal protein uL4 family. As to quaternary structure, part of the 50S ribosomal subunit.

Its function is as follows. One of the primary rRNA binding proteins, this protein initially binds near the 5'-end of the 23S rRNA. It is important during the early stages of 50S assembly. It makes multiple contacts with different domains of the 23S rRNA in the assembled 50S subunit and ribosome. In terms of biological role, forms part of the polypeptide exit tunnel. This is Large ribosomal subunit protein uL4 from Sinorhizobium fredii (strain NBRC 101917 / NGR234).